A 368-amino-acid polypeptide reads, in one-letter code: Chorismate synthase (368 aa).

Position 46 (Arg-46) interacts with NADP(+). FMN is bound by residues 123–125 (RSS), 240–241 (NA), Gly-285, 300–304 (KPTPT), and Arg-326.

The protein belongs to the chorismate synthase family. As to quaternary structure, homotetramer. It depends on FMNH2 as a cofactor.

The catalysed reaction is 5-O-(1-carboxyvinyl)-3-phosphoshikimate = chorismate + phosphate. Its pathway is metabolic intermediate biosynthesis; chorismate biosynthesis; chorismate from D-erythrose 4-phosphate and phosphoenolpyruvate: step 7/7. Catalyzes the anti-1,4-elimination of the C-3 phosphate and the C-6 proR hydrogen from 5-enolpyruvylshikimate-3-phosphate (EPSP) to yield chorismate, which is the branch point compound that serves as the starting substrate for the three terminal pathways of aromatic amino acid biosynthesis. This reaction introduces a second double bond into the aromatic ring system. This is Chorismate synthase from Porphyromonas gingivalis (strain ATCC BAA-308 / W83).